The following is a 309-amino-acid chain: Cell division protein FtsQ (309 aa).

At 1–52 the chain is on the cytoplasmic side; sequence MLALRGRRGKRVRYPADGVAEADEAFVLPRPLRRGVRFLISLGAGRIRFPNH. Residues 53-74 form a helical membrane-spanning segment; the sequence is TGTVAAAAFMVATGLYGMSLGG. Over 75-309 the chain is Periplasmic; that stretch reads HTQSFAQVST…KMLKAQEKRI (235 aa). Residues 89 to 157 form the POTRA domain; the sequence is FAIEDVRVSG…GTIEVVLKER (69 aa).

The protein belongs to the FtsQ/DivIB family. FtsQ subfamily.

It is found in the cell inner membrane. Its function is as follows. Essential cell division protein. This is Cell division protein FtsQ from Rhizobium meliloti (strain 1021) (Ensifer meliloti).